The chain runs to 395 residues: Na(+)/H(+) antiporter NhaA 1 (395 aa).

A run of 11 helical transmembrane segments spans residues 11–31 (FFSS…LAMV), 63–83 (MLLW…GLEV), 99–119 (VFPV…YLAF), 129–149 (GWAI…ALLG), 158–178 (IFLM…IALF), 183–203 (LSML…ALNL), 223–243 (VLKS…MIPL), 258–278 (VLHP…NAGV), 282–302 (GVTL…GLFI), 332–352 (IMAV…IATL), and 364–384 (WAKL…YLIL).

It belongs to the NhaA Na(+)/H(+) (TC 2.A.33) antiporter family.

It localises to the cell inner membrane. The enzyme catalyses Na(+)(in) + 2 H(+)(out) = Na(+)(out) + 2 H(+)(in). In terms of biological role, na(+)/H(+) antiporter that extrudes sodium in exchange for external protons. This is Na(+)/H(+) antiporter NhaA 1 from Klebsiella pneumoniae subsp. pneumoniae (strain ATCC 700721 / MGH 78578).